We begin with the raw amino-acid sequence, 236 residues long: MKMMDANEIISFIQNSTKSTPVKVYVKGDLEGISFGDSAKTFLNGQSGVVFGEWAEIKSVIEENKDKIEDYVIENDRRNSAIPMLDLKDVKARIEPGAIIRDQVEIGDNAVIMMGASINIGSVIGEGTMIDMNVVLGGRATVGKNCHIGAGSVLAGVIEPPSAKPVVVEDDVVIGANAVVLEGVTIGKGAVVAAGAIVVNDVEPYTVVAGTPAKKIKDIDEKTKGKTEIKQELRQL.

This sequence belongs to the transferase hexapeptide repeat family. DapH subfamily.

It catalyses the reaction (S)-2,3,4,5-tetrahydrodipicolinate + acetyl-CoA + H2O = L-2-acetamido-6-oxoheptanedioate + CoA. It participates in amino-acid biosynthesis; L-lysine biosynthesis via DAP pathway; LL-2,6-diaminopimelate from (S)-tetrahydrodipicolinate (acetylase route): step 1/3. Functionally, catalyzes the transfer of an acetyl group from acetyl-CoA to tetrahydrodipicolinate. The polypeptide is 2,3,4,5-tetrahydropyridine-2,6-dicarboxylate N-acetyltransferase (Bacillus velezensis (strain DSM 23117 / BGSC 10A6 / LMG 26770 / FZB42) (Bacillus amyloliquefaciens subsp. plantarum)).